The sequence spans 513 residues: Glycine/sarcosine/betaine reductase complex component C subunit beta (513 aa).

As to quaternary structure, heterooctamer of four alpha and four beta subunits. Component of the glycine, sarcosine and betaine reductase complexes, together with proteins A and B.

The enzyme catalyses acetyl phosphate + [thioredoxin]-disulfide + NH4(+) + H2O = [thioredoxin]-dithiol + glycine + phosphate + H(+). The catalysed reaction is acetyl phosphate + methylamine + [thioredoxin]-disulfide + H2O = sarcosine + [thioredoxin]-dithiol + phosphate + H(+). It catalyses the reaction acetyl phosphate + trimethylamine + [thioredoxin]-disulfide + H2O = glycine betaine + [thioredoxin]-dithiol + phosphate + H(+). Functionally, in the first step of glycine, betaine and sarcosine reductases, the substrate is bound to component PB via a Schiff base intermediate. Then the PB-activated substrate is nucleophilically attacked by the selenol anion of component PA to transform it to a carboxymethylated selenoether and the respective amine. By action of component PC, acetyl phosphate is formed, leaving component PA in its oxidized state. Finally component PA becomes reduced by the thioredoxin system to start a new catalytic cycle of reductive deamination. The sequence is that of Glycine/sarcosine/betaine reductase complex component C subunit beta (grdC) from Peptoclostridium acidaminophilum (Eubacterium acidaminophilum).